The sequence spans 373 residues: uncharacterized protein (373 aa).

This is an uncharacterized protein from Saccharomyces cerevisiae (strain ATCC 204508 / S288c) (Baker's yeast).